An 84-amino-acid chain; its full sequence is Small ribosomal subunit protein uS17 (84 aa).

The protein belongs to the universal ribosomal protein uS17 family. Part of the 30S ribosomal subunit.

One of the primary rRNA binding proteins, it binds specifically to the 5'-end of 16S ribosomal RNA. The protein is Small ribosomal subunit protein uS17 of Alkaliphilus oremlandii (strain OhILAs) (Clostridium oremlandii (strain OhILAs)).